The chain runs to 308 residues: Dihydroorotate dehydrogenase A (fumarate) (308 aa).

FMN contacts are provided by residues Ser24 and 48–49; that span reads KS. Substrate-binding positions include Lys48, 72–76, and Asn132; that span reads NANGL. Asn132 serves as a coordination point for FMN. Catalysis depends on Cys135, which acts as the Nucleophile. 2 residues coordinate FMN: Lys171 and Ile197. 198-199 is a binding site for substrate; the sequence is NT. FMN is bound by residues Gly223 and 249-250; that span reads GG.

Belongs to the dihydroorotate dehydrogenase family. Type 1 subfamily. Homodimer. It depends on FMN as a cofactor.

It is found in the cytoplasm. It carries out the reaction (S)-dihydroorotate + fumarate = orotate + succinate. It functions in the pathway pyrimidine metabolism; UMP biosynthesis via de novo pathway. In terms of biological role, catalyzes the conversion of dihydroorotate to orotate with fumarate as the electron acceptor. The sequence is that of Dihydroorotate dehydrogenase A (fumarate) (pyrD) from Limosilactobacillus reuteri (strain DSM 20016) (Lactobacillus reuteri).